A 686-amino-acid polypeptide reads, in one-letter code: Rhophilin-2 (686 aa).

The REM-1 domain maps to 26–100 (NPLAQTGRSK…LEGLNISVGV (75 aa)). Residues 46–66 (QILKAVRMRTGAENLLKVATN) are interaction with Rho. The BRO1 domain maps to 111 to 460 (PLIPLGLKET…RLKYAQHQDD (350 aa)). The PDZ domain occupies 515 to 593 (RSIHFTAEEG…DGVEMKVVSL (79 aa)). Phosphothreonine is present on Thr655.

Belongs to the RHPN family. Interacts with GTP-bound RhoA and RhoB. Interacts with both GTP- and GDP-bound RhoA. Interacts with KRT18. In terms of tissue distribution, mainly expressed in thyroid.

Its subcellular location is the cytoplasm. It is found in the perinuclear region. In terms of biological role, binds specifically to GTP-Rho. May function in a Rho pathway to limit stress fiber formation and/or increase the turnover of F-actin structures in the absence of high levels of RhoA activity. The polypeptide is Rhophilin-2 (RHPN2) (Canis lupus familiaris (Dog)).